The chain runs to 118 residues: Co-chaperonin GroES (118 aa).

The protein belongs to the GroES chaperonin family. As to quaternary structure, heptamer of 7 subunits arranged in a ring. Interacts with the chaperonin GroEL.

The protein localises to the cytoplasm. In terms of biological role, together with the chaperonin GroEL, plays an essential role in assisting protein folding. The GroEL-GroES system forms a nano-cage that allows encapsulation of the non-native substrate proteins and provides a physical environment optimized to promote and accelerate protein folding. GroES binds to the apical surface of the GroEL ring, thereby capping the opening of the GroEL channel. This chain is Co-chaperonin GroES, found in Helicobacter pylori (strain G27).